The sequence spans 429 residues: MRVLILGSGVIGTTTAWYLAQSGCEVTVVDRQPASGLETSYANAGQLSFGYTSPWAAPGVPGKAVKWLFEQHAPLSIRPTRDLRQLAWLSQMLRNCTAERYAVNKARMVRLSDYSRDCLNELRASTGLEFEGRQLGTTQLFRTQQQLDAAAQDIEVLAQYGVPYELLSPAQIAQYEPGLAGGGAQMAGALHLPEDQTGDCRLFTQRLADLATQAGVQFRYGQQIERLEHAGGEITGVQIDGRLVTADRYVLALGSYSADLLLSLGLHLPVYPLKGYSLTIPIVDAQRAPTSTVLDESYKIALTRFDERIRVGGMAEVAGFDLSLNPRRRATLEMVVNDLFPGAGDLAQAEFWTGLRPATPDGTPVVGATPYANLFLNTGHGTLGWTMACGSGRYLADLMQGRTPEIDTEGLDVFRYLSTRSTRPHREAA.

An FAD-binding site is contributed by 3 to 17 (VLILGSGVIGTTTAW).

It belongs to the DadA oxidoreductase family. FAD is required as a cofactor.

The catalysed reaction is a D-alpha-amino acid + A + H2O = a 2-oxocarboxylate + AH2 + NH4(+). Its pathway is amino-acid degradation; D-alanine degradation; NH(3) and pyruvate from D-alanine: step 1/1. Oxidative deamination of D-amino acids. The sequence is that of D-amino acid dehydrogenase from Xanthomonas campestris pv. campestris (strain B100).